A 313-amino-acid polypeptide reads, in one-letter code: Zinc transporter ZitB (313 aa).

Over 1–20 (MAHSHSHTSSHLPEDNNARR) the chain is Cytoplasmic. The chain crosses the membrane as a helical span at residues 21-41 (LLYAFGVTAGFMLVEVVGGFL). At 42–47 (SGSLAL) the chain is on the periplasmic side. Residues 48–68 (LADAGHMLTDTAALLFALLAV) traverse the membrane as a helical segment. The Cytoplasmic segment spans residues 69–89 (QFSRRPPTIRHTFGWLRLTTL). Residues 90 to 110 (AAFVNAIALVVITILIVWEAI) form a helical membrane-spanning segment. Residues 111-121 (ERFRTPRPVEG) lie on the Periplasmic side of the membrane. Residues 122–142 (GMMMAIAVAGLLANILSFWLL) form a helical membrane-spanning segment. The Cytoplasmic portion of the chain corresponds to 143–159 (HHGSEEKNLNVRAAALH). Residues 160–180 (VLGDLLGSVGAIIAALIIIWT) form a helical membrane-spanning segment. Position 181 (glycine 181) is a topological domain, periplasmic. The helical transmembrane segment at 182 to 202 (WTPADPILSILVSLLVLRSAW) threads the bilayer. At 203 to 313 (RLLKDSVNEL…GVSGHSHHHH (111 aa)) the chain is on the cytoplasmic side.

It belongs to the cation diffusion facilitator (CDF) transporter (TC 2.A.4) family. SLC30A subfamily.

The protein localises to the cell inner membrane. In terms of biological role, involved in zinc efflux across the cytoplasmic membrane, thus reducing zinc accumulation in the cytoplasm and rendering bacteria more resistant to zinc. It may contribute to zinc homeostasis at low concentrations of zinc, whereas ZntA is required for growth at more toxic concentrations. In Escherichia coli (strain K12), this protein is Zinc transporter ZitB (zitB).